A 402-amino-acid chain; its full sequence is Putative RNA-guided DNA endonuclease (402 aa).

The active site involves Asp-188. The disordered stretch occupies residues 202–239; sequence KITNPKHERRDRARLAKAQRDVSRKAKGSANRKKARRK. The segment covering 204-225 has biased composition (basic and acidic residues); that stretch reads TNPKHERRDRARLAKAQRDVSR. Residues 226 to 239 show a composition bias toward basic residues; the sequence is KAKGSANRKKARRK. The active site involves Glu-272. Zn(2+) contacts are provided by Cys-325, Cys-328, Cys-344, and Cys-346. Asp-353 is an active-site residue. The interval 373 to 402 is disordered; sequence GIRPQRESSRTGRSSVKQEPQRATAGIPRL.

This sequence in the N-terminal section; belongs to the transposase 2 family. The protein in the C-terminal section; belongs to the transposase 35 family.

An RNA-guided dsDNA endonuclease. When guided by an RNA derived from the right-end element of its insertion sequence element (IS), cleaves DNA downstream of the transposon-associated motif (TAM). Cleaves supercoiled and linear DNA in a staggered manner 15-21 bases from the TAM yielding 5'-overhangs. Binds reRNA, an approximately 150 nucleotide base sRNA derived from the 3' end of its own gene, the right end (RE) of the insertion sequence (IS) plus sequence downstream of the IS. The polypeptide is Putative RNA-guided DNA endonuclease (Streptomyces pristinaespiralis).